The following is a 162-amino-acid chain: Transcriptional repressor NrdR (162 aa).

The segment at methionine 1–aspartate 21 is disordered. Residues cysteine 3–cysteine 34 fold into a zinc finger. The region spanning leucine 49–glutamate 139 is the ATP-cone domain.

The protein belongs to the NrdR family. Zn(2+) serves as cofactor.

Negatively regulates transcription of bacterial ribonucleotide reductase nrd genes and operons by binding to NrdR-boxes. The sequence is that of Transcriptional repressor NrdR from Halorubrum lacusprofundi (strain ATCC 49239 / DSM 5036 / JCM 8891 / ACAM 34).